A 420-amino-acid chain; its full sequence is MTRTAKLTIIPPGRPLSGRAMPPGSKSITNRALLLAGLAKGTSRMTGALKSDDTRYMADALRAMGVAIDEPDDTTFVVTGSGRLMPPKAPLFLGNAGTATRFLTAAAALVDGTVVVDGDEHMRKRPIGPLVEAMRTLGIDVSADTGCPPVTVRGTGRFEADRILIDGGLSSQYVSALLMMAAGGDRPVDIELVGEDIGALGYIDLTTAAMKAFGARVEKTSPVTWRVEPTGYRAADFVIEPDASAATYLWAAEVLSDGQIDLGVPNDAFTQPDAKAYETIAKFPHLPAEIDGSQMQDAVPTIAVLAAFNETPVRFVGIANLRVKECDRIRALSTGLNNIREGLAVEEGDDLIVHSDPALAGQTLPAEIDTFADHRIAMSFALAGLKIDGITILDPDCVGKTFPAYWRTLAALGVTYQGKD.

The segment at 1-24 (MTRTAKLTIIPPGRPLSGRAMPPG) is disordered. 3 residues coordinate 3-phosphoshikimate: Lys-26, Ser-27, and Arg-31. Lys-26 contacts phosphoenolpyruvate. Phosphoenolpyruvate contacts are provided by Gly-97 and Arg-125. Residues Ser-170, Ser-171, Gln-172, Asp-297, Asn-320, and Lys-324 each coordinate 3-phosphoshikimate. Gln-172 serves as a coordination point for phosphoenolpyruvate. The Proton acceptor role is filled by Asp-297. Residues Arg-328, Arg-375, and Lys-400 each coordinate phosphoenolpyruvate.

The protein belongs to the EPSP synthase family. As to quaternary structure, monomer.

The protein localises to the cytoplasm. The catalysed reaction is 3-phosphoshikimate + phosphoenolpyruvate = 5-O-(1-carboxyvinyl)-3-phosphoshikimate + phosphate. It functions in the pathway metabolic intermediate biosynthesis; chorismate biosynthesis; chorismate from D-erythrose 4-phosphate and phosphoenolpyruvate: step 6/7. Catalyzes the transfer of the enolpyruvyl moiety of phosphoenolpyruvate (PEP) to the 5-hydroxyl of shikimate-3-phosphate (S3P) to produce enolpyruvyl shikimate-3-phosphate and inorganic phosphate. This is 3-phosphoshikimate 1-carboxyvinyltransferase from Rhizobium etli (strain CIAT 652).